A 276-amino-acid chain; its full sequence is Pantothenate synthetase (276 aa).

26 to 33 contributes to the ATP binding site; that stretch reads MGFLHAGH. Catalysis depends on His33, which acts as the Proton donor. (R)-pantoate is bound at residue Gln57. Gln57 contacts beta-alanine. 143–146 lines the ATP pocket; the sequence is GQKD. Gln149 provides a ligand contact to (R)-pantoate. ATP contacts are provided by residues Ile172 and 180–183; that span reads MSSR.

This sequence belongs to the pantothenate synthetase family. Homodimer.

It localises to the cytoplasm. The catalysed reaction is (R)-pantoate + beta-alanine + ATP = (R)-pantothenate + AMP + diphosphate + H(+). It functions in the pathway cofactor biosynthesis; (R)-pantothenate biosynthesis; (R)-pantothenate from (R)-pantoate and beta-alanine: step 1/1. Its function is as follows. Catalyzes the condensation of pantoate with beta-alanine in an ATP-dependent reaction via a pantoyl-adenylate intermediate. This chain is Pantothenate synthetase, found in Herpetosiphon aurantiacus (strain ATCC 23779 / DSM 785 / 114-95).